The sequence spans 120 residues: UPF0145 protein Mboo_1021 (120 aa).

It belongs to the UPF0145 family.

This is UPF0145 protein Mboo_1021 from Methanoregula boonei (strain DSM 21154 / JCM 14090 / 6A8).